A 101-amino-acid polypeptide reads, in one-letter code: Acylphosphatase (101 aa).

In terms of domain architecture, Acylphosphatase-like spans 13–101; that stretch reads RARILVRGVV…GEFRGFEIRY (89 aa). Active-site residues include Arg28 and Asn46.

The protein belongs to the acylphosphatase family.

It carries out the reaction an acyl phosphate + H2O = a carboxylate + phosphate + H(+). In Aeropyrum pernix (strain ATCC 700893 / DSM 11879 / JCM 9820 / NBRC 100138 / K1), this protein is Acylphosphatase (acyP).